The sequence spans 866 residues: N-alpha-acetyltransferase 15, NatA auxiliary subunit (866 aa).

TPR repeat units lie at residues 46 to 79 (GETL…DLKS), 80 to 113 (HVCW…DKDN), 148 to 184 (RASW…SPDK), and 224 to 257 (LAVE…NPEN). The residue at position 262 (Lys-262) is an N6-acetyllysine. The residue at position 302 (Ser-302) is a Phosphoserine. 3 TPR repeats span residues 374-407 (LWVQ…TPTL), 409-441 (ELFL…DTAD), and 485-522 (MWFQ…TDDQ). The interaction with HYPK stretch occupies residues 500-866 (KFGEALKKCY…AEAEELANEI (367 aa)). Phosphoserine is present on residues Ser-537 and Ser-588. Basic and acidic residues predominate over residues 579-594 (EHEADTANMSDKELKK). Residues 579–642 (EHEADTANMS…EEIGGPKEEL (64 aa)) form a disordered region. A compositionally biased stretch (basic residues) spans 595 to 604 (LRNKQRRAQK). Positions 606-621 (AQIEEEKKNAEKEKQQ) are enriched in basic and acidic residues. The stretch at 672-705 (IETHLFAFEIYFRKEKFLLMLQSVKRAFAIDSSH) is one TPR 8 repeat. Residues Lys-735 and Lys-756 each carry the N6-acetyllysine modification. Phosphoserine is present on residues Ser-855 and Ser-856.

Component of the N-terminal acetyltransferase A (NatA) complex composed of NAA10 or probably NAA11 and NAA15. Interacts with XRCC6, NAA50 and XRCC5. Associates with HYPK when in a complex with NAA10. Interaction with HYPK reduces the capacity to interact with NAA50. Cleaved by caspases during apoptosis.

It localises to the cytoplasm. The protein resides in the nucleus. Functionally, auxillary subunit of the N-terminal acetyltransferase A (NatA) complex which displays alpha (N-terminal) acetyltransferase activity. The NAT activity may be important for vascular, hematopoietic and neuronal growth and development. Required to control retinal neovascularization in adult ocular endothelial cells. In complex with XRCC6 and XRCC5 (Ku80), up-regulates transcription from the osteocalcin promoter. This is N-alpha-acetyltransferase 15, NatA auxiliary subunit (NAA15) from Pongo abelii (Sumatran orangutan).